The following is a 443-amino-acid chain: Chromosomal replication initiator protein DnaA (443 aa).

Positions 1–67 (MDAWSRSLER…RELLAHFAGF (67 aa)) are domain I, interacts with DnaA modulators. The domain II stretch occupies residues 67–105 (FSDVFLEIGSRPRPVEAQNAPFSTPSAHVSSEPQVPFAG). The interval 106-323 (NLDNHYTFAN…GALNTLTARA (218 aa)) is domain III, AAA+ region. 4 residues coordinate ATP: Gly-151, Gly-153, Lys-154, and Thr-155. Positions 324-443 (NFTGRAITTE…WDKLIRKLSE (120 aa)) are domain IV, binds dsDNA.

This sequence belongs to the DnaA family. Oligomerizes as a right-handed, spiral filament on DNA at oriC.

The protein localises to the cytoplasm. Its function is as follows. Plays an essential role in the initiation and regulation of chromosomal replication. ATP-DnaA binds to the origin of replication (oriC) to initiate formation of the DNA replication initiation complex once per cell cycle. Binds the DnaA box (a 9 base pair repeat at the origin) and separates the double-stranded (ds)DNA. Forms a right-handed helical filament on oriC DNA; dsDNA binds to the exterior of the filament while single-stranded (ss)DNA is stabiized in the filament's interior. The ATP-DnaA-oriC complex binds and stabilizes one strand of the AT-rich DNA unwinding element (DUE), permitting loading of DNA polymerase. After initiation quickly degrades to an ADP-DnaA complex that is not apt for DNA replication. Binds acidic phospholipids. The polypeptide is Chromosomal replication initiator protein DnaA (Stenotrophomonas maltophilia (strain R551-3)).